The following is a 592-amino-acid chain: MPSRTGPKMEGSGGRVRLKAHYGGDIFITSVDAATTFEELCEEVRDMCRLHQQHPLTLKWVDSEGDPCTVSSQMELEEAFRLARQCRDEGLIIHVFPSTPEQPGLPCPGEDKSIYRRGARRWRKLYRANGHLFQAKRFNRRAYCGQCSERIWGLARQGYRCINCKLLVHKRCHGLVPLTCRKHMDSVMPSQEPPVDDKNEDADLPSEETDGIAYISSSRKHDSIKDDSEDLKPVIDGMDGIKISQGLGLQDFDLIRVIGRGSYAKVLLVRLKKNDQIYAMKVVKKELVHDDEDIDWVQTEKHVFEQASSNPFLVGLHSCFQTTSRLFLVIEYVNGGDLMFHMQRQRKLPEEHARFYAAEICIALNFLHERGIIYRDLKLDNVLLDADGHIKLTDYGMCKEGLGPGDTTSTFCGTPNYIAPEILRGEEYGFSVDWWALGVLMFEMMAGRSPFDIITDNPDMNTEDYLFQVILEKPIRIPRFLSVKASHVLKGFLNKDPKERLGCRPQTGFSDIKSHAFFRSIDWDLLEKKQALPPFQPQITDDYGLDNFDTQFTSEPVQLTPDDEDAIKRIDQSEFEGFEYINPLLLSTEESV.

A PB1 domain is found at 15-98; that stretch reads RVRLKAHYGG…EGLIIHVFPS (84 aa). The segment at 79-145 is interaction with SQSTM1; it reads AFRLARQCRD…KRFNRRAYCG (67 aa). The Phorbol-ester/DAG-type zinc finger occupies 130-180; that stretch reads GHLFQAKRFNRRAYCGQCSERIWGLARQGYRCINCKLLVHKRCHGLVPLTC. The Protein kinase domain occupies 252-518; it reads FDLIRVIGRG…FSDIKSHAFF (267 aa). ATP contacts are provided by residues 258-266 and K281; that span reads IGRGSYAKV. D376 (proton acceptor) is an active-site residue. T410 carries the phosphothreonine; by PDPK1 and PI3K modification. An AGC-kinase C-terminal domain is found at 519 to 590; sequence RSIDWDLLEK…INPLLLSTEE (72 aa). Position 560 is a phosphothreonine (T560). S591 is modified (phosphoserine).

Belongs to the protein kinase superfamily. AGC Ser/Thr protein kinase family. PKC subfamily. Forms a ternary complex with SQSTM1 and KCNAB2. Forms another ternary complex with SQSTM1 and GABRR3. Forms a complex with SQSTM1 and MAP2K5. Interacts with PARD6A, PARD6B, PARD6G and SQSTM1. Part of a complex with PARD3, PARD6A or PARD6B or PARD6G and CDC42 or RAC1. Interacts with ADAP1/CENTA1. Forms a ternary complex composed of SQSTM1 and PAWR. Interacts directly with SQSTM1. Interacts with IKBKB. Interacts (via the protein kinase domain) with WWC1. Forms a tripartite complex with WWC1 and DDR1, but predominantly in the absence of collagen. Component of the Par polarity complex, composed of at least phosphorylated PRKCZ, PARD3 and TIAM1. Interacts with PDPK1 (via N-terminal region). Interacts with WDFY2 (via WD repeats 1-3). Interacts with VAMP2. Forms a complex with WDFY2 and VAMP2. Interacts with APPL1. Interacts with WWC1, WWC2 and WWC3. CDH5 is required for its phosphorylation at Thr-410. Phosphorylated by protein kinase PDPK1; phosphorylation is inhibited by the apoptotic C-terminal cleavage product of PKN2. Phosphorylation at Thr-410 by PI3K activates the kinase. Expressed in brain, and to a lesser extent in lung, kidney and testis.

It localises to the cytoplasm. Its subcellular location is the endosome. The protein resides in the cell junction. The protein localises to the membrane. It carries out the reaction L-seryl-[protein] + ATP = O-phospho-L-seryl-[protein] + ADP + H(+). The catalysed reaction is L-threonyl-[protein] + ATP = O-phospho-L-threonyl-[protein] + ADP + H(+). Atypical PKCs (PRKCI and PRKCZ) exhibit an elevated basal enzymatic activity (that may be due to the interaction with SMG1 or SQSTM1) and are not regulated by diacylglycerol, phosphatidylserine, phorbol esters or calcium ions. Two specific sites, Thr-410 (activation loop of the kinase domain) and Thr-560 (turn motif), need to be phosphorylated for its full activation. Phosphatidylinositol 3,4,5-trisphosphate might be a physiological activator. Isoform 2: Constitutively active. In terms of biological role, calcium- and diacylglycerol-independent serine/threonine-protein kinase that functions in phosphatidylinositol 3-kinase (PI3K) pathway and mitogen-activated protein (MAP) kinase cascade, and is involved in NF-kappa-B activation, mitogenic signaling, cell proliferation, cell polarity, inflammatory response and maintenance of long-term potentiation (LTP). Upon lipopolysaccharide (LPS) treatment in macrophages, or following mitogenic stimuli, functions downstream of PI3K to activate MAP2K1/MEK1-MAPK1/ERK2 signaling cascade independently of RAF1 activation. Required for insulin-dependent activation of AKT3, but may function as an adapter rather than a direct activator. Upon insulin treatment may act as a downstream effector of PI3K and contribute to the activation of translocation of the glucose transporter SLC2A4/GLUT4 and subsequent glucose transport in adipocytes. In EGF-induced cells, binds and activates MAP2K5/MEK5-MAPK7/ERK5 independently of its kinase activity and can activate JUN promoter through MEF2C. Through binding with SQSTM1/p62, functions in interleukin-1 signaling and activation of NF-kappa-B with the specific adapters RIPK1 and TRAF6. Participates in TNF-dependent transactivation of NF-kappa-B by phosphorylating and activating IKBKB kinase, which in turn leads to the degradation of NF-kappa-B inhibitors. In migrating astrocytes, forms a cytoplasmic complex with PARD6A and is recruited by CDC42 to function in the establishment of cell polarity along with the microtubule motor and dynein. In association with FEZ1, stimulates neuronal differentiation in PC12 cells. In the inflammatory response, is required for the T-helper 2 (Th2) differentiation process, including interleukin production, efficient activation of JAK1 and the subsequent phosphorylation and nuclear translocation of STAT6. May be involved in development of allergic airway inflammation (asthma), a process dependent on Th2 immune response. In the NF-kappa-B-mediated inflammatory response, can relieve SETD6-dependent repression of NF-kappa-B target genes by phosphorylating the RELA subunit at 'Ser-311'. Phosphorylates VAMP2 in vitro. Phosphorylates and activates LRRK1, which phosphorylates RAB proteins involved in intracellular trafficking. Its function is as follows. Involved in late synaptic long term potention phase in CA1 hippocampal cells and long term memory maintenance. The polypeptide is Protein kinase C zeta type (PRKCZ) (Homo sapiens (Human)).